The primary structure comprises 223 residues: Small ribosomal subunit protein uS3 (223 aa).

In terms of domain architecture, KH type-2 spans 39-117; the sequence is IREFLRKKPS…RPELNAKLVA (79 aa).

This sequence belongs to the universal ribosomal protein uS3 family. In terms of assembly, part of the 30S ribosomal subunit. Forms a tight complex with proteins S10 and S14.

Functionally, binds the lower part of the 30S subunit head. Binds mRNA in the 70S ribosome, positioning it for translation. The sequence is that of Small ribosomal subunit protein uS3 from Chlamydia abortus (strain DSM 27085 / S26/3) (Chlamydophila abortus).